The chain runs to 245 residues: Putative binding protein HI_1525 (245 aa).

The N-terminal stretch at 1–19 (MKKLVAVTSMILTTFSVQA) is a signal peptide. The molybdate site is built by S56 and V163.

Belongs to the bacterial solute-binding protein ModA family.

The protein localises to the periplasm. Probably involved in the binding-dependent system. This is Putative binding protein HI_1525 from Haemophilus influenzae (strain ATCC 51907 / DSM 11121 / KW20 / Rd).